A 578-amino-acid chain; its full sequence is CTP synthase 2 (578 aa).

Residues 300 to 553 (SIALVGKYTK…MLAASGKLNT (254 aa)) enclose the Glutamine amidotransferase type-1 domain. Catalysis depends on for GATase activity residues cysteine 399, histidine 526, and glutamate 528.

This sequence belongs to the CTP synthase family.

It catalyses the reaction UTP + L-glutamine + ATP + H2O = CTP + L-glutamate + ADP + phosphate + 2 H(+). It functions in the pathway pyrimidine metabolism; CTP biosynthesis via de novo pathway; CTP from UDP: step 2/2. Its function is as follows. Catalyzes the ATP-dependent amination of UTP to CTP with either L-glutamine or ammonia as the source of nitrogen. Constitutes the rate-limiting enzyme in the synthesis of cytosine nucleotides. The chain is CTP synthase 2 (ctps2) from Xenopus laevis (African clawed frog).